We begin with the raw amino-acid sequence, 446 residues long: Tryptophan synthase beta chain 2 (446 aa).

The residue at position 110 (Lys110) is an N6-(pyridoxal phosphate)lysine.

It belongs to the TrpB family. Tetramer of two alpha and two beta chains. Pyridoxal 5'-phosphate serves as cofactor.

It carries out the reaction (1S,2R)-1-C-(indol-3-yl)glycerol 3-phosphate + L-serine = D-glyceraldehyde 3-phosphate + L-tryptophan + H2O. The protein operates within amino-acid biosynthesis; L-tryptophan biosynthesis; L-tryptophan from chorismate: step 5/5. The beta subunit is responsible for the synthesis of L-tryptophan from indole and L-serine. The polypeptide is Tryptophan synthase beta chain 2 (trpB2) (Pyrococcus furiosus (strain ATCC 43587 / DSM 3638 / JCM 8422 / Vc1)).